Reading from the N-terminus, the 200-residue chain is Probable GTP-binding protein EngB (200 aa).

An EngB-type G domain is found at 30–199 (KKAEVAIAGR…EDYIYENWIK (170 aa)). Residues 38-45 (GRSNAGKS), 64-68 (GKTRL), 82-85 (DMPG), 149-152 (TKAD), and 178-180 (VSA) each bind GTP. Mg(2+) contacts are provided by S45 and T66.

This sequence belongs to the TRAFAC class TrmE-Era-EngA-EngB-Septin-like GTPase superfamily. EngB GTPase family. It depends on Mg(2+) as a cofactor.

Necessary for normal cell division and for the maintenance of normal septation. The polypeptide is Probable GTP-binding protein EngB (Bdellovibrio bacteriovorus (strain ATCC 15356 / DSM 50701 / NCIMB 9529 / HD100)).